The chain runs to 184 residues: ATP synthase subunit delta (184 aa).

Belongs to the ATPase delta chain family. As to quaternary structure, F-type ATPases have 2 components, F(1) - the catalytic core - and F(0) - the membrane proton channel. F(1) has five subunits: alpha(3), beta(3), gamma(1), delta(1), epsilon(1). F(0) has three main subunits: a(1), b(2) and c(10-14). The alpha and beta chains form an alternating ring which encloses part of the gamma chain. F(1) is attached to F(0) by a central stalk formed by the gamma and epsilon chains, while a peripheral stalk is formed by the delta and b chains.

It localises to the cell membrane. Functionally, f(1)F(0) ATP synthase produces ATP from ADP in the presence of a proton or sodium gradient. F-type ATPases consist of two structural domains, F(1) containing the extramembraneous catalytic core and F(0) containing the membrane proton channel, linked together by a central stalk and a peripheral stalk. During catalysis, ATP synthesis in the catalytic domain of F(1) is coupled via a rotary mechanism of the central stalk subunits to proton translocation. This protein is part of the stalk that links CF(0) to CF(1). It either transmits conformational changes from CF(0) to CF(1) or is implicated in proton conduction. This Wolbachia pipientis subsp. Culex pipiens (strain wPip) protein is ATP synthase subunit delta.